Here is a 283-residue protein sequence, read N- to C-terminus: Pantothenate synthetase (283 aa).

34–41 provides a ligand contact to ATP; the sequence is MGALHDGH. His41 (proton donor) is an active-site residue. Gln65 provides a ligand contact to (R)-pantoate. A beta-alanine-binding site is contributed by Gln65. Residue 152 to 155 coordinates ATP; that stretch reads GEKD. A (R)-pantoate-binding site is contributed by Gln158. Residues Val181 and 189–192 each bind ATP; that span reads MSSR.

The protein belongs to the pantothenate synthetase family. In terms of assembly, homodimer.

The protein resides in the cytoplasm. It carries out the reaction (R)-pantoate + beta-alanine + ATP = (R)-pantothenate + AMP + diphosphate + H(+). It functions in the pathway cofactor biosynthesis; (R)-pantothenate biosynthesis; (R)-pantothenate from (R)-pantoate and beta-alanine: step 1/1. Its function is as follows. Catalyzes the condensation of pantoate with beta-alanine in an ATP-dependent reaction via a pantoyl-adenylate intermediate. The protein is Pantothenate synthetase of Rhodopseudomonas palustris (strain BisB18).